A 518-amino-acid polypeptide reads, in one-letter code: Subtilisin-like serine protease Cla h 9.0101 (518 aa).

Positions 1 to 16 are cleaved as a signal peptide; it reads MRGALAGLSLATLATA. Positions 17-138 are cleaved as a propeptide — removed in mature form; it reads SPVLVNSIHN…ERDQEVHVLG (122 aa). Residues 44-136 form the Inhibitor I9 domain; sequence YMIKFKDHVT…LVERDQEVHV (93 aa). The region spanning 148–454 is the Peptidase S8 domain; it reads PWGLARISHR…GGESNYSAIV (307 aa). Catalysis depends on charge relay system residues Asp184 and His216. The interval 244–298 is igE-binding; sequence RSNGSGSMSDVVKGVEYAAESHLEQVSITKKGKRKGFKGSTANMSLGGGKSPILD. 2 N-linked (GlcNAc...) asparagine glycosylation sites follow: Asn246 and Asn286. Catalysis depends on Ser382, which acts as the Charge relay system. Asn449 carries an N-linked (GlcNAc...) asparagine glycan. Residues 460–518 constitute a propeptide, removed in mature form; the sequence is KATHRPTMLEEIESEAKVASKKVYSEGDELAHKVAELTEKVEDLIAGELKDMFRELKRE.

Belongs to the peptidase S8 family.

In terms of biological role, serine protease. The polypeptide is Subtilisin-like serine protease Cla h 9.0101 (Davidiella tassiana (Mycosphaerella tassiana)).